A 456-amino-acid chain; its full sequence is Argininosuccinate lyase (456 aa).

Belongs to the lyase 1 family. Argininosuccinate lyase subfamily.

The protein localises to the cytoplasm. It carries out the reaction 2-(N(omega)-L-arginino)succinate = fumarate + L-arginine. The protein operates within amino-acid biosynthesis; L-arginine biosynthesis; L-arginine from L-ornithine and carbamoyl phosphate: step 3/3. The sequence is that of Argininosuccinate lyase from Shewanella pealeana (strain ATCC 700345 / ANG-SQ1).